The sequence spans 406 residues: Purine nucleoside permease (406 aa).

Residues Met1–Ala22 form the signal peptide.

It belongs to the NUP family. Predicted to be a substrate for cleavage by KEX2.

Mammalian nucleoside transport inhibitors dipyridamole and NBMPR inhibit adenosine transport by NUP. Functionally, nucleoside permease that transports adenosine and guanosine. Does not show any transport activities towards cytidine, adenine, guanine, uridine, and uracil. This Candida albicans (strain SC5314 / ATCC MYA-2876) (Yeast) protein is Purine nucleoside permease.